A 590-amino-acid polypeptide reads, in one-letter code: Cytosolic Fe-S cluster assembly factor nar1 (590 aa).

[4Fe-4S] cluster-binding residues include C20, C62, C65, C68, C214, C269, C456, and C460.

It belongs to the NARF family.

Its function is as follows. Component of the cytosolic Fe/S protein assembly machinery. Required for maturation of extramitochondrial Fe/S proteins. May play a role in the transfer of pre-assembled Fe/S clusters to target apoproteins. The sequence is that of Cytosolic Fe-S cluster assembly factor nar1 (nar1) from Talaromyces marneffei (strain ATCC 18224 / CBS 334.59 / QM 7333) (Penicillium marneffei).